A 554-amino-acid polypeptide reads, in one-letter code: Perforin-1 (554 aa).

Positions 1–20 (MATCLFLLGLFLLLPRPVPA) are cleaved as a signal peptide. 3 disulfide bridges follow: Cys-22–Cys-75, Cys-30–Cys-72, and Cys-101–Cys-175. In terms of domain architecture, MACPF spans 26–374 (TRSECKQKHK…HYIMSRARWQ (349 aa)). Residues 128–148 (WRVGLDVNPRPEANMRASVAG) form a beta stranded membrane-spanning segment. Asn-204 carries N-linked (GlcNAc...) asparagine glycosylation. 4 disulfide bridges follow: Cys-241-Cys-407, Cys-376-Cys-392, Cys-380-Cys-394, and Cys-396-Cys-406. The beta stranded transmembrane segment at 256–278 (CLNVEAQVSIGAQASVSSEYKAC) threads the bilayer. The N-linked (GlcNAc...) asparagine glycan is linked to Asn-375. In terms of domain architecture, EGF-like spans 375-407 (NCSRPCRSGQHKSSHDSCQCECQDSKVTNQDCC). Residues 395–513 (ECQDSKVTNQ…FHEVTCELNH (119 aa)) enclose the C2 domain. Ca(2+)-binding residues include Gly-428, Asp-429, Thr-432, Ala-433, Asp-435, Asn-454, Glu-467, Asp-483, Ala-484, Asp-485, Trp-488, Asp-489, Asp-490, and Asp-491. 2 cysteine pairs are disulfide-bonded: Cys-496–Cys-509 and Cys-524–Cys-533. Asn-548 carries an N-linked (GlcNAc...) asparagine glycan.

This sequence belongs to the complement C6/C7/C8/C9 family. In terms of assembly, monomer, as soluble protein. Homooligomer; homooligomerizes to form a pore-forming ring. It depends on Ca(2+) as a cofactor. Post-translationally, N-glycosylated. The glycosylation sites are facing the interior of the pore. In terms of tissue distribution, detected in cytotoxic T-lymphocytes and natural killer cells.

The protein localises to the cytolytic granule. It localises to the secreted. Its subcellular location is the cell membrane. The protein resides in the endosome lumen. Functionally, pore-forming protein that plays a key role in granzyme-mediated programmed cell death, and in defense against virus-infected or neoplastic cells. Can insert into the membrane of target cells in its calcium-bound form, oligomerize and form large pores. Promotes cytolysis and apoptosis of target cells by mediating the passage and uptake of cytotoxic granzymes. Facilitates the delivery of cationic cargo protein, while anionic or neural proteins are not delivered efficiently. Perforin pores allow the release of mature caspase-7 (CASP7) into the extracellular milieu. The chain is Perforin-1 (Prf1) from Mus musculus (Mouse).